Reading from the N-terminus, the 476-residue chain is Raffinose invertase (476 aa).

Residues 35-38 (WMND), Gln-54, 97-98 (FS), 159-160 (RD), Glu-214, and Trp-297 contribute to the substrate site. Asp-38 is a catalytic residue.

Belongs to the glycosyl hydrolase 32 family. As to quaternary structure, homodimer.

It catalyses the reaction Hydrolysis of terminal non-reducing beta-D-fructofuranoside residues in beta-D-fructofuranosides.. Its function is as follows. May prevent the potential hasard of excessive sucrose accumulation. The polypeptide is Raffinose invertase (rafD) (Escherichia coli).